The chain runs to 266 residues: Phosphatidylglycerol--prolipoprotein diacylglyceryl transferase (266 aa).

Helical transmembrane passes span 21-41 (LAIRWYGLMYLVGFLFAMWLA), 60-80 (LLFAGFLGVVLGGRIGYVLFY), 95-115 (VWTGGMSFHGGLLGVMTAMLW), 124-144 (FFSVADFIAPLVPFGLGMGRM), 176-196 (SQLYEAFLEGFVLLIILNIFI), 203-223 (GAVSGLFLIGYGSFRFIIEYF), and 236-256 (WISMGQILSSPMIIFGALLML). Residue Arg143 coordinates a 1,2-diacyl-sn-glycero-3-phospho-(1'-sn-glycerol).

The protein belongs to the Lgt family.

It localises to the cell inner membrane. The enzyme catalyses L-cysteinyl-[prolipoprotein] + a 1,2-diacyl-sn-glycero-3-phospho-(1'-sn-glycerol) = an S-1,2-diacyl-sn-glyceryl-L-cysteinyl-[prolipoprotein] + sn-glycerol 1-phosphate + H(+). It participates in protein modification; lipoprotein biosynthesis (diacylglyceryl transfer). Functionally, catalyzes the transfer of the diacylglyceryl group from phosphatidylglycerol to the sulfhydryl group of the N-terminal cysteine of a prolipoprotein, the first step in the formation of mature lipoproteins. The chain is Phosphatidylglycerol--prolipoprotein diacylglyceryl transferase from Photobacterium profundum (strain SS9).